The following is a 426-amino-acid chain: N-formyl-4-amino-5-aminomethyl-2-methylpyrimidine deformylase (426 aa).

Residues 1 to 31 (MDQQIYSLQKKVEEHKEELIQLAKTLISYQT) adopt a coiled-coil conformation. A Zn(2+)-binding site is contributed by His-89. Asp-91 is a catalytic residue. Residue Asp-122 participates in Zn(2+) binding. The Proton acceptor role is filled by Glu-156. Zn(2+)-binding residues include Glu-157, Asp-180, and His-394.

Belongs to the peptidase M20A family. Zn(2+) serves as cofactor. It depends on Co(2+) as a cofactor.

It carries out the reaction N-formyl-4-amino-5-aminomethyl-2-methylpyrimidine + H2O = 4-amino-5-aminomethyl-2-methylpyrimidine + formate. It participates in cofactor biosynthesis; thiamine diphosphate biosynthesis. Its function is as follows. Catalyzes the deformylation of the formylaminopyrimidine N-formyl-4-amino-5-aminomethyl-2-methylpyrimidine (FAMP) to give the corresponding aminopyrimidine. This is N-formyl-4-amino-5-aminomethyl-2-methylpyrimidine deformylase from Bacillus subtilis (strain 168).